The primary structure comprises 178 residues: Ribosome maturation factor RimM (178 aa).

The 74-residue stretch at 100-173 (ADEYFIHQLY…QIVVRLLPGL (74 aa)) folds into the PRC barrel domain.

Belongs to the RimM family. In terms of assembly, binds ribosomal protein uS19.

Its subcellular location is the cytoplasm. An accessory protein needed during the final step in the assembly of 30S ribosomal subunit, possibly for assembly of the head region. Essential for efficient processing of 16S rRNA. May be needed both before and after RbfA during the maturation of 16S rRNA. It has affinity for free ribosomal 30S subunits but not for 70S ribosomes. In Roseiflexus castenholzii (strain DSM 13941 / HLO8), this protein is Ribosome maturation factor RimM.